A 141-amino-acid polypeptide reads, in one-letter code: Hemoglobin subunit alpha (141 aa).

The Globin domain occupies 1-141; it reads VLSAADKTNV…VATVLTSKYR (141 aa). Serine 3 carries the post-translational modification Phosphoserine. Residue lysine 7 is modified to N6-succinyllysine. A Phosphothreonine modification is found at threonine 8. Lysine 11 is modified (N6-succinyllysine). At lysine 16 the chain carries N6-acetyllysine; alternate. Lysine 16 carries the N6-succinyllysine; alternate modification. A Phosphotyrosine modification is found at tyrosine 24. Phosphoserine is present on serine 35. Lysine 40 bears the N6-succinyllysine mark. A Phosphoserine modification is found at serine 49. Histidine 58 is a binding site for O2. Histidine 87 contributes to the heme b binding site. Serine 102 is modified (phosphoserine). Residue threonine 108 is modified to Phosphothreonine. Serine 124 carries the post-translational modification Phosphoserine. Threonine 134 and threonine 137 each carry phosphothreonine. Phosphoserine is present on serine 138.

It belongs to the globin family. In terms of assembly, heterotetramer of two alpha chains and two beta chains. As to expression, red blood cells.

Its function is as follows. Involved in oxygen transport from the lung to the various peripheral tissues. Hemopressin acts as an antagonist peptide of the cannabinoid receptor CNR1. Hemopressin-binding efficiently blocks cannabinoid receptor CNR1 and subsequent signaling. The protein is Hemoglobin subunit alpha (HBA) of Ctenodactylus gundi (Northern gundi).